Reading from the N-terminus, the 142-residue chain is Large ribosomal subunit protein uL11 (142 aa).

It belongs to the universal ribosomal protein uL11 family. As to quaternary structure, part of the ribosomal stalk of the 50S ribosomal subunit. Interacts with L10 and the large rRNA to form the base of the stalk. L10 forms an elongated spine to which L12 dimers bind in a sequential fashion forming a multimeric L10(L12)X complex. One or more lysine residues are methylated.

Functionally, forms part of the ribosomal stalk which helps the ribosome interact with GTP-bound translation factors. This chain is Large ribosomal subunit protein uL11, found in Shewanella pealeana (strain ATCC 700345 / ANG-SQ1).